We begin with the raw amino-acid sequence, 264 residues long: Acetylglutamate kinase (264 aa).

Substrate contacts are provided by residues 40-41 (GG), Arg-62, and Asn-158.

The protein belongs to the acetylglutamate kinase family. ArgB subfamily.

The protein resides in the cytoplasm. The enzyme catalyses N-acetyl-L-glutamate + ATP = N-acetyl-L-glutamyl 5-phosphate + ADP. Its pathway is amino-acid biosynthesis; L-arginine biosynthesis; N(2)-acetyl-L-ornithine from L-glutamate: step 2/4. Catalyzes the ATP-dependent phosphorylation of N-acetyl-L-glutamate. The chain is Acetylglutamate kinase from Cytophaga hutchinsonii (strain ATCC 33406 / DSM 1761 / CIP 103989 / NBRC 15051 / NCIMB 9469 / D465).